A 434-amino-acid chain; its full sequence is 4-hydroxy-3-methylbut-2-en-1-yl diphosphate synthase (flavodoxin) (434 aa).

Residues 1-15 (MQSEAQSPRSSQICS) show a composition bias toward polar residues. The disordered stretch occupies residues 1–24 (MQSEAQSPRSSQICSTEPVFGGHQ). [4Fe-4S] cluster is bound by residues Cys322, Cys325, Cys368, and Glu375.

This sequence belongs to the IspG family. The cofactor is [4Fe-4S] cluster.

The enzyme catalyses (2E)-4-hydroxy-3-methylbut-2-enyl diphosphate + oxidized [flavodoxin] + H2O + 2 H(+) = 2-C-methyl-D-erythritol 2,4-cyclic diphosphate + reduced [flavodoxin]. Its pathway is isoprenoid biosynthesis; isopentenyl diphosphate biosynthesis via DXP pathway; isopentenyl diphosphate from 1-deoxy-D-xylulose 5-phosphate: step 5/6. In terms of biological role, converts 2C-methyl-D-erythritol 2,4-cyclodiphosphate (ME-2,4cPP) into 1-hydroxy-2-methyl-2-(E)-butenyl 4-diphosphate. In Burkholderia cenocepacia (strain ATCC BAA-245 / DSM 16553 / LMG 16656 / NCTC 13227 / J2315 / CF5610) (Burkholderia cepacia (strain J2315)), this protein is 4-hydroxy-3-methylbut-2-en-1-yl diphosphate synthase (flavodoxin).